The primary structure comprises 290 residues: Ribonuclease 3 (290 aa).

The RNase III domain maps to 20-145 (YSCFYRILGF…FIGAIYLDRG (126 aa)). Mg(2+) is bound at residue E62. Residue D66 is part of the active site. Mg(2+) contacts are provided by N131 and E134. E134 is an active-site residue. The region spanning 173-242 (NFKSKLIEWS…AQMTLKKIKG (70 aa)) is the DRBM domain. Positions 254–290 (KTQNNVPAEDTTPESEMSLTAENQQIDEIISTEEISV) are disordered. Residues 267-279 (ESEMSLTAENQQI) show a composition bias toward polar residues.

Belongs to the ribonuclease III family. Homodimer. Mg(2+) is required as a cofactor.

It localises to the cytoplasm. The catalysed reaction is Endonucleolytic cleavage to 5'-phosphomonoester.. Its function is as follows. Digests double-stranded RNA. Involved in the processing of primary rRNA transcript to yield the immediate precursors to the large and small rRNAs (23S and 16S). Processes some mRNAs, and tRNAs when they are encoded in the rRNA operon. Processes pre-crRNA and tracrRNA of type II CRISPR loci if present in the organism. The polypeptide is Ribonuclease 3 (Bacteroides fragilis (strain YCH46)).